A 97-amino-acid chain; its full sequence is Down syndrome critical region protein 8 (97 aa).

In terms of tissue distribution, expressed in numerous tissues; not found in breast, heart, small intestine and liver. Isoform 1: Predominantly expressed in the testis. Isoform 3: Predominantly expressed in the testis, at lower level in the placenta, during malignant progression of melanocytic tumors and in several tumors of varying origins. Isoform 4: Predominantly expressed in the testis, at lower level in the placenta, during malignant progression of melanocytic tumors and in several tumors of varying origins. Isoform 5: Predominantly expressed in the testis. Isoform 6: Predominantly expressed in the testis.

In Homo sapiens (Human), this protein is Down syndrome critical region protein 8.